The sequence spans 398 residues: NADH-quinone oxidoreductase subunit D (398 aa).

This sequence belongs to the complex I 49 kDa subunit family. In terms of assembly, NDH-1 is composed of 14 different subunits. Subunits NuoB, C, D, E, F, and G constitute the peripheral sector of the complex.

It is found in the cell inner membrane. It catalyses the reaction a quinone + NADH + 5 H(+)(in) = a quinol + NAD(+) + 4 H(+)(out). In terms of biological role, NDH-1 shuttles electrons from NADH, via FMN and iron-sulfur (Fe-S) centers, to quinones in the respiratory chain. The immediate electron acceptor for the enzyme in this species is believed to be ubiquinone. Couples the redox reaction to proton translocation (for every two electrons transferred, four hydrogen ions are translocated across the cytoplasmic membrane), and thus conserves the redox energy in a proton gradient. The chain is NADH-quinone oxidoreductase subunit D from Caulobacter vibrioides (strain ATCC 19089 / CIP 103742 / CB 15) (Caulobacter crescentus).